A 195-amino-acid chain; its full sequence is Molybdenum cofactor guanylyltransferase (195 aa).

Residues 12 to 14 (LAG), Lys-25, Asn-53, Asp-70, and Asp-100 contribute to the GTP site. Asp-100 provides a ligand contact to Mg(2+).

This sequence belongs to the MobA family. Monomer. It depends on Mg(2+) as a cofactor.

It localises to the cytoplasm. The catalysed reaction is Mo-molybdopterin + GTP + H(+) = Mo-molybdopterin guanine dinucleotide + diphosphate. Functionally, transfers a GMP moiety from GTP to Mo-molybdopterin (Mo-MPT) cofactor (Moco or molybdenum cofactor) to form Mo-molybdopterin guanine dinucleotide (Mo-MGD) cofactor. The chain is Molybdenum cofactor guanylyltransferase from Vibrio parahaemolyticus serotype O3:K6 (strain RIMD 2210633).